A 308-amino-acid chain; its full sequence is Ribosomal RNA small subunit methyltransferase H (308 aa).

S-adenosyl-L-methionine is bound by residues 32 to 34 (GGH), Asp51, Phe78, Asp99, and Gln106.

It belongs to the methyltransferase superfamily. RsmH family.

Its subcellular location is the cytoplasm. The enzyme catalyses cytidine(1402) in 16S rRNA + S-adenosyl-L-methionine = N(4)-methylcytidine(1402) in 16S rRNA + S-adenosyl-L-homocysteine + H(+). Functionally, specifically methylates the N4 position of cytidine in position 1402 (C1402) of 16S rRNA. The protein is Ribosomal RNA small subunit methyltransferase H of Campylobacter curvus (strain 525.92).